A 445-amino-acid polypeptide reads, in one-letter code: 23S rRNA (uracil(1939)-C(5))-methyltransferase RlmD (445 aa).

The TRAM domain occupies 12 to 70; sequence SKQLSSKLSLKVTQLDHLGAGIAHHDGKIVFINGALPGETVSVQLTEQKKKFARAKLLK. [4Fe-4S] cluster is bound by residues Cys83, Cys89, Cys92, and Cys171. Residues Gln278, Phe307, Asn312, Glu328, Asp355, and Asp375 each coordinate S-adenosyl-L-methionine. The active-site Nucleophile is Cys401.

This sequence belongs to the class I-like SAM-binding methyltransferase superfamily. RNA M5U methyltransferase family. RlmD subfamily.

The catalysed reaction is uridine(1939) in 23S rRNA + S-adenosyl-L-methionine = 5-methyluridine(1939) in 23S rRNA + S-adenosyl-L-homocysteine + H(+). In terms of biological role, catalyzes the formation of 5-methyl-uridine at position 1939 (m5U1939) in 23S rRNA. In Shewanella halifaxensis (strain HAW-EB4), this protein is 23S rRNA (uracil(1939)-C(5))-methyltransferase RlmD.